The sequence spans 531 residues: MAAIKIANPGAEVTRSQAALAVNICAARGLQDVLRPTLGPKGALKMLVSGAGDIKLTKDGNVLLHEMQIQHPTASIIAKVAAAQDHVTGDGTTSNVLIIGELLKQADLYISEGLHPRIITEGFDVAKTKALEVLDEIKVQKEMKREILLDVARTSLQTKVHAELADILTEAVVDSVLAIRRPGVPIDLFMVEIVEMRHKSETDTQLIRGLVLDHGARHPRMRKQVRDAYILTCNVSLEYEKTEVSSGFFYKTVEEKEKLVKAERKFIEDRVQKIIDLKQKVCAESNKGFVVINQKGIDPVSLEMLAKHNIVALRRAKRRNLERLTLACGGLAVNSFEGLSEECLGHAGLVFEYALGEEKFTFIEDCVNPLSVTLLVKGPNKHTLIQIKDALRDGLRAVKNAIEDGCVVPGAGAVEVAIAEALVNYKHRVQGRVRLGIQAFADALLIIPKVLAQNSGYDLQETLIKIQTKHAESKELLGIDLNTGEPMAAAEAGIWDNYCVKKHLLHSCTVIATNILLVDEIMRAGMSSLRD.

This sequence belongs to the TCP-1 chaperonin family. In terms of assembly, component of the chaperonin-containing T-complex (TRiC), a heterooligomeric complex of about 850 to 900 kDa that forms two stacked rings, 12 to 16 nm in diameter. Testis specific.

The protein resides in the cytoplasm. Component of the chaperonin-containing T-complex (TRiC), a molecular chaperone complex that assists the folding of proteins upon ATP hydrolysis. This chain is T-complex protein 1 subunit zeta-2 (Cct6b), found in Mus musculus (Mouse).